The primary structure comprises 204 residues: UPF0215 protein MTH_1316 (204 aa).

It belongs to the UPF0215 family.

This is UPF0215 protein MTH_1316 from Methanothermobacter thermautotrophicus (strain ATCC 29096 / DSM 1053 / JCM 10044 / NBRC 100330 / Delta H) (Methanobacterium thermoautotrophicum).